A 29-amino-acid chain; its full sequence is Brevinin-2Ra (29 aa).

An intrachain disulfide couples Cys23 to Cys29.

Expressed by the skin glands.

The protein resides in the secreted. Antimicrobial peptide. The sequence is that of Brevinin-2Ra from Pelophylax ridibundus (Marsh frog).